The following is a 187-amino-acid chain: Elongation factor P (187 aa).

It belongs to the elongation factor P family.

The protein resides in the cytoplasm. It participates in protein biosynthesis; polypeptide chain elongation. Functionally, involved in peptide bond synthesis. Stimulates efficient translation and peptide-bond synthesis on native or reconstituted 70S ribosomes in vitro. Probably functions indirectly by altering the affinity of the ribosome for aminoacyl-tRNA, thus increasing their reactivity as acceptors for peptidyl transferase. This chain is Elongation factor P, found in Desulforapulum autotrophicum (strain ATCC 43914 / DSM 3382 / VKM B-1955 / HRM2) (Desulfobacterium autotrophicum).